The following is a 245-amino-acid chain: tRNA1(Val) (adenine(37)-N6)-methyltransferase (245 aa).

It belongs to the methyltransferase superfamily. tRNA (adenine-N(6)-)-methyltransferase family.

It is found in the cytoplasm. It carries out the reaction adenosine(37) in tRNA1(Val) + S-adenosyl-L-methionine = N(6)-methyladenosine(37) in tRNA1(Val) + S-adenosyl-L-homocysteine + H(+). Functionally, specifically methylates the adenine in position 37 of tRNA(1)(Val) (anticodon cmo5UAC). In Escherichia coli (strain UTI89 / UPEC), this protein is tRNA1(Val) (adenine(37)-N6)-methyltransferase.